Consider the following 389-residue polypeptide: Allantoicase (389 aa).

Belongs to the allantoicase family.

It catalyses the reaction allantoate + H2O = (S)-ureidoglycolate + urea. The protein operates within nitrogen metabolism; (S)-allantoin degradation; (S)-ureidoglycolate from allantoate (aminidohydrolase route): step 1/1. In terms of biological role, utilization of purines as secondary nitrogen sources, when primary sources are limiting. This is Allantoicase (allc) from Xenopus tropicalis (Western clawed frog).